We begin with the raw amino-acid sequence, 218 residues long: Octanoyltransferase (218 aa).

Residues 32–218 form the BPL/LPL catalytic domain; that stretch reads GEAAEAIWLL…LRTFPQHFPD (187 aa). Residues 71 to 78, 151 to 153, and 164 to 166 each bind substrate; these read RGGQYTYH, AIG, and GLS. C182 (acyl-thioester intermediate) is an active-site residue.

Belongs to the LipB family.

The protein localises to the cytoplasm. The catalysed reaction is octanoyl-[ACP] + L-lysyl-[protein] = N(6)-octanoyl-L-lysyl-[protein] + holo-[ACP] + H(+). Its pathway is protein modification; protein lipoylation via endogenous pathway; protein N(6)-(lipoyl)lysine from octanoyl-[acyl-carrier-protein]: step 1/2. In terms of biological role, catalyzes the transfer of endogenously produced octanoic acid from octanoyl-acyl-carrier-protein onto the lipoyl domains of lipoate-dependent enzymes. Lipoyl-ACP can also act as a substrate although octanoyl-ACP is likely to be the physiological substrate. This chain is Octanoyltransferase, found in Cereibacter sphaeroides (strain ATCC 17023 / DSM 158 / JCM 6121 / CCUG 31486 / LMG 2827 / NBRC 12203 / NCIMB 8253 / ATH 2.4.1.) (Rhodobacter sphaeroides).